The primary structure comprises 237 residues: Class B acid phosphatase (237 aa).

Positions 1-25 (MRKITLALSAACLLFSLNNAVVARA) are cleaved as a signal peptide. D69 (nucleophile) is an active-site residue. Positions 69 and 71 each coordinate Mg(2+). The active-site Proton donor is D71. Substrate is bound by residues 137-138 (TG) and K177. Residue D192 coordinates Mg(2+).

The protein belongs to the class B bacterial acid phosphatase family. As to quaternary structure, homotetramer. Requires Mg(2+) as cofactor.

The protein resides in the periplasm. The enzyme catalyses a phosphate monoester + H2O = an alcohol + phosphate. In terms of biological role, dephosphorylates several organic phosphate monoesters. Also has a phosphotransferase activity catalyzing the transfer of low-energy phosphate groups from organic phosphate monoesters to free hydroxyl groups of various organic compounds. This is Class B acid phosphatase from Enterobacter sp. (strain 638).